The sequence spans 161 residues: Nucleotide-binding protein amb3630 (161 aa).

The protein belongs to the YajQ family.

Functionally, nucleotide-binding protein. This chain is Nucleotide-binding protein amb3630, found in Paramagnetospirillum magneticum (strain ATCC 700264 / AMB-1) (Magnetospirillum magneticum).